Reading from the N-terminus, the 179-residue chain is GTP-dependent dephospho-CoA kinase (179 aa).

Aspartate 49, valine 50, valine 51, aspartate 68, lysine 70, and glutamate 126 together coordinate GTP.

Belongs to the GTP-dependent DPCK family.

It catalyses the reaction 3'-dephospho-CoA + GTP = GDP + CoA + H(+). It functions in the pathway cofactor biosynthesis; coenzyme A biosynthesis. In terms of biological role, catalyzes the GTP-dependent phosphorylation of the 3'-hydroxyl group of dephosphocoenzyme A to form coenzyme A (CoA). The sequence is that of GTP-dependent dephospho-CoA kinase from Pyrococcus abyssi (strain GE5 / Orsay).